Here is a 356-residue protein sequence, read N- to C-terminus: Glutamine synthetase root isozyme 3 (356 aa).

The GS beta-grasp domain occupies 19 to 99; that stretch reads IIAEYIWIGG…VMCDCYTPAG (81 aa). One can recognise a GS catalytic domain in the interval 106–356; that stretch reads KRYNAAKIFS…IAETTIIWKP (251 aa).

Belongs to the glutamine synthetase family. In terms of assembly, homooctamer. In terms of tissue distribution, found in all the tissues examined with higher expression found in tissues of the root.

Its subcellular location is the cytoplasm. It catalyses the reaction L-glutamate + NH4(+) + ATP = L-glutamine + ADP + phosphate + H(+). Plays a role in the flow of nitrogen into nitrogenous organic compounds. The sequence is that of Glutamine synthetase root isozyme 3 (GLN4) from Zea mays (Maize).